Consider the following 302-residue polypeptide: Glycine--tRNA ligase alpha subunit (302 aa).

The protein belongs to the class-II aminoacyl-tRNA synthetase family. Tetramer of two alpha and two beta subunits.

Its subcellular location is the cytoplasm. The catalysed reaction is tRNA(Gly) + glycine + ATP = glycyl-tRNA(Gly) + AMP + diphosphate. The protein is Glycine--tRNA ligase alpha subunit of Xanthomonas axonopodis pv. citri (strain 306).